We begin with the raw amino-acid sequence, 437 residues long: Proline--tRNA ligase (437 aa).

It belongs to the class-II aminoacyl-tRNA synthetase family. ProS type 2 subfamily. Homodimer.

Its subcellular location is the cytoplasm. The catalysed reaction is tRNA(Pro) + L-proline + ATP = L-prolyl-tRNA(Pro) + AMP + diphosphate. Functionally, catalyzes the attachment of proline to tRNA(Pro) in a two-step reaction: proline is first activated by ATP to form Pro-AMP and then transferred to the acceptor end of tRNA(Pro). The polypeptide is Proline--tRNA ligase (Rhizorhabdus wittichii (strain DSM 6014 / CCUG 31198 / JCM 15750 / NBRC 105917 / EY 4224 / RW1) (Sphingomonas wittichii)).